The primary structure comprises 352 residues: 4-hydroxy-2-oxovalerate aldolase 5 (352 aa).

Residues Ile-9 to Ile-261 enclose the Pyruvate carboxyltransferase domain. Arg-17–Asp-18 serves as a coordination point for substrate. Asp-18 lines the Mn(2+) pocket. His-21 serves as the catalytic Proton acceptor. Ser-171 and His-200 together coordinate substrate. Residues His-200 and His-202 each coordinate Mn(2+). Tyr-291 provides a ligand contact to substrate.

This sequence belongs to the 4-hydroxy-2-oxovalerate aldolase family.

The catalysed reaction is (S)-4-hydroxy-2-oxopentanoate = acetaldehyde + pyruvate. In Rhodococcus opacus (strain B4), this protein is 4-hydroxy-2-oxovalerate aldolase 5.